The chain runs to 1141 residues: Serine-aspartate repeat-containing protein E (1141 aa).

An N-terminal signal peptide occupies residues 1–52 (MINRDNKKAITKKGMISNRLNKFSIRKYTVGTASILVGTTLIFGLGNQEAKA). The YSIRK-G/S signaling motif motif lies at 23 to 34 (FSIRKYTVGTAS). Residues 53–601 (AENTSTENAK…GDGTVKPEEK (549 aa)) form a ligand binding A region region. The disordered stretch occupies residues 54 to 248 (ENTSTENAKQ…RSTKPVATAP (195 aa)). The span at 61–75 (AKQDDATTSDNKEVV) shows a compositional bias: basic and acidic residues. The segment covering 77–90 (ETENNSTTENDSTN) has biased composition (low complexity). Residues 92-108 (IKKETNTDSQPEAKEES) show a composition bias toward basic and acidic residues. Over residues 109–126 (TTSSTQQQQNNVTATTET) the composition is skewed to low complexity. A compositionally biased stretch (basic and acidic residues) spans 130–145 (NIEKENVKPSTDKTAT). A compositionally biased stretch (polar residues) spans 159-207 (NYTNNDVTTKPSTSEIQTKPTTPQESTNIENSQPQPTPSKVDNQVTDAT). The span at 216–241 (SKEELKNNPEKLKELVRNDNNTDRST) shows a compositional bias: basic and acidic residues. CNA-B domains follow at residues 602 to 714 (LYKI…YKEP), 715 to 824 (KYNL…YKTP), and 825 to 935 (KYSL…EEDT). The interval 899 to 1117 (VTNTTEDDKD…GSENNGSNNA (219 aa)) is disordered. Composition is skewed to acidic residues over residues 903 to 913 (TEDDKDADGGE) and 930 to 1080 (YFEE…DSDS). The short motif at 1104 to 1108 (LPETG) is the LPXTG sorting signal element. Pentaglycyl murein peptidoglycan amidated threonine is present on threonine 1107. The propeptide at 1108 to 1141 (GSENNGSNNATLFGGLFAALGSLLLFGRRKKQNK) is removed by sortase.

Belongs to the serine-aspartate repeat-containing protein (SDr) family. As to quaternary structure, interacts with host complement factor H/CFAH (via C-terminus). Interacts with host complement regulator C4BPA.

The protein resides in the secreted. The protein localises to the cell wall. Functionally, cell surface-associated calcium-binding protein which plays an important role in adhesion and pathogenesis. Contributes to the resistance to killing by innate immune components in blood and thus attenuates bacterial clearance by interacting with host complement factor H/CFAH and modulating its activity. Also inhibits bacterial opsonization and killing by interacting with host complement regulator C4BPA and thus inhibiting classical complement pathway activation. This chain is Serine-aspartate repeat-containing protein E (sdrE), found in Staphylococcus aureus (strain N315).